The sequence spans 757 residues: Double zinc ribbon and ankyrin repeat-containing protein 1 (757 aa).

2 consecutive DZANK-type zinc fingers follow at residues 230-290 (CAHC…VVCE) and 359-407 (CSRC…GSCG). 2 ANK repeats span residues 631–662 (ENRLLLEEVGSTGKGRLSVLEQLLDEGADPNC) and 666–695 (QGRPAVIVAVVNKHFEAIPVLAQRGADIDQ).

In terms of assembly, interacts with NINL. Associates with DYNC1H1 and multiple dynein intermediate and light chains as well as actin-binding proteins. In terms of tissue distribution, expressed in retina.

It localises to the cell projection. It is found in the cilium. Involved in vesicle transport in photoreceptor cells. This Rattus norvegicus (Rat) protein is Double zinc ribbon and ankyrin repeat-containing protein 1.